A 258-amino-acid chain; its full sequence is Lyso-ornithine lipid O-acyltransferase (258 aa).

The helical transmembrane segment at 7–29 (LLRSARLLGLVALGLGLAAWVSL) threads the bilayer.

Belongs to the 1-acyl-sn-glycerol-3-phosphate acyltransferase family. OlsA subfamily.

It is found in the membrane. The catalysed reaction is a lyso-ornithine lipid + a fatty acyl-[ACP] = an N(2)-[(3R)-3-(acyloxy)acyl]-L-ornithine lipid + holo-[ACP]. The protein operates within lipid metabolism. Catalyzes the second step in the formation of ornithine lipids, which are phosphorus-free membrane lipids. Uses acyl-acyl carrier protein (acyl-AcpP) as an acyl donor and converts lyso-ornithine lipid (LOL) into ornithine lipid (OL). This chain is Lyso-ornithine lipid O-acyltransferase, found in Pseudomonas aeruginosa (strain ATCC 15692 / DSM 22644 / CIP 104116 / JCM 14847 / LMG 12228 / 1C / PRS 101 / PAO1).